Consider the following 1507-residue polypeptide: Transient receptor potential cation channel subfamily M member 2 (1507 aa).

Residues 1–11 show a composition bias toward basic and acidic residues; sequence MEPLDQRRTDS. The disordered stretch occupies residues 1-24; that stretch reads MEPLDQRRTDSDQEEGFGVQSRRA. At 1–751 the chain is on the cytoplasmic side; it reads MEPLDQRRTD…WWGQLCVDNG (751 aa). Residues threonine 173, asparagine 178, arginine 301, glycine 332, and threonine 335 each contribute to the ADP-D-ribose site. Threonine 739 carries the phosphothreonine modification. Residues 752-768 lie within the membrane without spanning it; that stretch reads LWRIILCMLAFPLLFTG. Topologically, residues 769–793 are cytoplasmic; it reads FISFREKRLQALCRLARVRAFFNAP. A helical transmembrane segment spans residues 794–814; it reads VVIFYLNILSYFAFLCLFAYV. Topologically, residues 815 to 825 are extracellular; it reads LMVDFQPSPSW. A helical membrane pass occupies residues 826-846; sequence CEYLIYLWLFSLVCEETRQLF. Glutamate 841 and glutamine 844 together coordinate Ca(2+). The Cytoplasmic segment spans residues 847 to 865; sequence YDPDGCGLMKMASLYFSDF. A helical membrane pass occupies residues 866 to 886; it reads WNKLDVGAILLFIAGLTCRLI. Asparagine 867 is a Ca(2+) binding site. Residues 887–894 are Extracellular-facing; the sequence is PATLYPGR. The chain crosses the membrane as a helical span at residues 895 to 915; the sequence is IILSLDFIMFCLRLMHIFTIS. Residues 916–927 are Cytoplasmic-facing; the sequence is KTLGPKIIIVKR. The helical transmembrane segment at 928–948 threads the bilayer; the sequence is MMKDVFFFLFLLAVWVVSFGV. Over 949-968 the chain is Extracellular; that stretch reads AKQAILIHNESRVDWIFRGV. An intramembrane region (pore-forming) is located at residues 969–983; sequence IYHSYLTIFGQIPTY. Positions 977–980 match the Selectivity filter motif; that stretch reads FGQI. The Extracellular segment spans residues 984–1020; the sequence is IDGVNFSMDQCSPNGTDPYKPKCPESDWTGQAPAFPE. Cysteine 994 and cysteine 1006 form a disulfide bridge. A helical membrane pass occupies residues 1021–1042; that stretch reads WLTVTLLCLYLLFANILLLNLL. The Cytoplasmic portion of the chain corresponds to 1043–1077; it reads IAMFNYTFQEVQEHTDQIWKFQRHDLIEEYHGRPP. Residue glutamate 1071 participates in Ca(2+) binding. The stretch at 1078–1096 is an intramembrane region; sequence APPPLILLSHLQLLIKRIV. The Cytoplasmic portion of the chain corresponds to 1097-1507; that stretch reads LKIPAKRHKQ…KVASLFGAHF (411 aa). A Nudix hydrolase domain is found at 1351-1502; sequence RWKRNQGGGI…KKILQKVASL (152 aa). An ADP-D-ribose-binding site is contributed by serine 1379. Residues 1387 to 1408 carry the Nudix box motif; the sequence is GSREPGKMLPRKLKQVLQQEYW. Positions 1428, 1430, 1489, and 1491 each coordinate ADP-D-ribose.

It belongs to the transient receptor (TC 1.A.4) family. LTrpC subfamily. TRPM2 sub-subfamily. As to quaternary structure, homotetramer. In terms of processing, phosphorylation of TRPM2 at Thr-739 by protein kinase C (PKC) counteracts the effect of cytosolic Ca(2+) and elevates the temperature threshold. Detected in pancreas beta-cells. Detected in fetal brain cortex neurons (at protein level).

It is found in the cell membrane. It localises to the perikaryon. Its subcellular location is the cell projection. The protein resides in the cytoplasmic vesicle. The protein localises to the lysosome. It catalyses the reaction Ca(2+)(in) = Ca(2+)(out). The catalysed reaction is Na(+)(in) = Na(+)(out). With respect to regulation, activated by intracellular ADP-ribose, beta-NAD (NAD(+)) and similar compounds, and by oxidative stress caused by reactive oxygen or nitrogen species. Ca(2+) and PI(4,5)P2 are required for channel opening by ADP-ribose. Activation by ADP-ribose and beta-NAD is strongly increased by moderate heat (35 to 40 degrees Celsius). Likewise, reactive oxygen species lower the threshold for activation by moderate heat (37 degrees Celsius). Activated by moderate heat (35 to 40 degrees Celsius). Inactivated by exposure to extracellular pH between 4.0 and 6.5; irreversibly inactivated when open channels are exposed to extracellular pH between 4.0 and 6.5, while pre-exposure of closed channels to extracellular pH 5.5 gives rise to currents that rapidly inactivate, but protects against irreversible inactivation. Inactivated by intracellular ATP. Activated by arachidonic acid. Inhibited by 2-aminoethyl diphenylborinate (2-APB). Functionally, nonselective, voltage-independent cation channel that mediates Na(+) and Ca(2+) influx, leading to increased cytoplasmic Ca(2+) levels. Functions as a ligand-gated ion channel gated by intracellular adenosine diphosphate ribose (ADP-ribose), Ca(2+), warm temperature, and oxidative stress. The precise physiological activators are under debate; the true, physiological activators may be ADP-ribose and ADP-ribose-2'-phosphate. Binding of ADP-ribose to the cytoplasmic Nudix domain causes a conformation change; the channel is primed but still requires Ca(2+) binding to trigger channel opening. Extracellular Ca(2+) passes through the channel and increases channel activity. Also contributes to Ca(2+) release from intracellular stores in response to ADP-ribose. Plays a role in numerous processes that involve signaling via intracellular Ca(2+) levels. Besides, mediates the release of lysosomal Zn(2+) stores in response to reactive oxygen species, leading to increased cytosolic Zn(2+) levels. Plays a role in insulin secretion, a process that requires increased cytoplasmic Ca(2+) levels. Required for normal IFNG and cytokine secretion and normal innate immune immunity in response to bacterial infection. Required for normal phagocytosis and cytokine release by macrophages exposed to zymosan (in vitro). Plays a role in dendritic cell differentiation and maturation, and in dendritic cell chemotaxis via its role in regulating cytoplasmic Ca(2+) levels. Plays a role in the regulation of the reorganization of the actin cytoskeleton and filopodia formation in response to reactive oxygen species via its function in increasing cytoplasmic Ca(2+) and Zn(2+) levels. Confers susceptibility to cell death following oxidative stress. In Rattus norvegicus (Rat), this protein is Transient receptor potential cation channel subfamily M member 2.